Here is a 236-residue protein sequence, read N- to C-terminus: Thiamine import ATP-binding protein ThiQ (236 aa).

An ABC transporter domain is found at 2 to 230; that stretch reads LKLEKITYLY…SAAKASVLGI (229 aa). 32-39 contacts ATP; sequence GPSGAGKS.

This sequence belongs to the ABC transporter superfamily. Thiamine importer (TC 3.A.1.19.1) family. In terms of assembly, the complex is composed of two ATP-binding proteins (ThiQ), two transmembrane proteins (ThiP) and a solute-binding protein (ThiB).

The protein resides in the cell inner membrane. The enzyme catalyses thiamine(out) + ATP + H2O = thiamine(in) + ADP + phosphate + H(+). Part of the ABC transporter complex ThiBPQ involved in thiamine import. Responsible for energy coupling to the transport system. The chain is Thiamine import ATP-binding protein ThiQ from Yersinia pestis bv. Antiqua (strain Antiqua).